The chain runs to 521 residues: Vang-like protein 2 (521 aa).

Positions 1-81 (MDTESQYSGY…TTVVTGTSEH (81 aa)) are disordered. The Cytoplasmic segment spans residues 1–108 (MDTESQYSGY…VPLDCSRHLG (108 aa)). The span at 15-33 (GHSRSSRKHRDRRDRHRSK) shows a compositional bias: basic residues. A compositionally biased stretch (basic and acidic residues) spans 57–67 (ESTRGDERDDN). The span at 69–81 (GETTTVVTGTSEH) shows a compositional bias: low complexity. The helical transmembrane segment at 109–129 (VAAGAILALLSFLTPLAFLLL) threads the bilayer. At 130–147 (PPLLWREELEPCGTACEG) the chain is on the extracellular side. A helical transmembrane segment spans residues 148 to 168 (LFISVAFKLLILLLGSWALFF). At 169 to 178 (RRPKASLPRV) the chain is on the cytoplasmic side. Residues 179–199 (FVLRALLMVLVFLLVISYWLF) form a helical membrane-spanning segment. Topologically, residues 200–217 (YGVRILDARERSYQGVVQ) are extracellular. Residues 218–238 (FAVSLVDALLFVHYLAVVLLE) traverse the membrane as a helical segment. Residues 239–521 (LRQLQPQFTL…VMRLQSETSV (283 aa)) lie on the Cytoplasmic side of the membrane.

Belongs to the Vang family. Homodimer and heterodimer with Vangl1. Interacts through its C-terminal region with the N-terminal half of DVL1, DVL2 and DVL3. The PDZ domain of DVL1, DVL2 and DVL3 is required for the interaction. Variants Glu-255 and Asn-464 impair interaction with the DVL proteins. Also interacts with the PDZ domains of MAGI3, SCRIB/SCRB1 and FZD3. Interacts with PRICKLE3. In terms of tissue distribution, primarily expressed in the brain and epididymis. Not detected in the cochlea of Lp mice.

It is found in the cell membrane. In terms of biological role, involved in the control of early morphogenesis and patterning of both axial midline structures and the development of neural plate. Plays a role in the regulation of planar cell polarity, particularly in the orientation of stereociliary bundles in the cochlea. Required for polarization and movement of myocardializing cells in the outflow tract and seems to act via RHOA signaling to regulate this process. Required for cell surface localization of FZD3 and FZD6 in the inner ear. This is Vang-like protein 2 (Vangl2) from Mus musculus (Mouse).